The primary structure comprises 107 residues: Nucleoid-associated protein A1C_06705 (107 aa).

This sequence belongs to the YbaB/EbfC family. Homodimer.

Its subcellular location is the cytoplasm. It localises to the nucleoid. Functionally, binds to DNA and alters its conformation. May be involved in regulation of gene expression, nucleoid organization and DNA protection. The polypeptide is Nucleoid-associated protein A1C_06705 (Rickettsia akari (strain Hartford)).